The sequence spans 364 residues: Ribosomal RNA large subunit methyltransferase F (364 aa).

The segment covering 1–17 has biased composition (low complexity); that stretch reads MPKPAIKTAAKPATSSA. The interval 1–53 is disordered; that stretch reads MPKPAIKTAAKPATSSAGKRGKPNTPKSVAKPKTAKPKTASKPKVKPGEKKRL. A compositionally biased stretch (basic residues) spans 33 to 53; the sequence is KTAKPKTASKPKVKPGEKKRL.

This sequence belongs to the methyltransferase superfamily. METTL16/RlmF family.

Its subcellular location is the cytoplasm. It carries out the reaction adenosine(1618) in 23S rRNA + S-adenosyl-L-methionine = N(6)-methyladenosine(1618) in 23S rRNA + S-adenosyl-L-homocysteine + H(+). Its function is as follows. Specifically methylates the adenine in position 1618 of 23S rRNA. In Shewanella sp. (strain MR-7), this protein is Ribosomal RNA large subunit methyltransferase F.